Reading from the N-terminus, the 271-residue chain is Mannosyl-3-phosphoglycerate phosphatase (271 aa).

Aspartate 13 functions as the Nucleophile in the catalytic mechanism. The Mg(2+) site is built by aspartate 13, aspartate 15, and aspartate 214.

Belongs to the HAD-like hydrolase superfamily. MPGP family. Mg(2+) serves as cofactor.

It localises to the cytoplasm. It catalyses the reaction 2-O-(alpha-D-mannosyl)-3-phosphoglycerate + H2O = (2R)-2-O-(alpha-D-mannosyl)-glycerate + phosphate. In Escherichia coli (strain SMS-3-5 / SECEC), this protein is Mannosyl-3-phosphoglycerate phosphatase.